Reading from the N-terminus, the 25-residue chain is uncharacterized protein (25 aa).

The protein resides in the plastid. Its subcellular location is the chloroplast. This is an uncharacterized protein from Trieres chinensis (Marine centric diatom).